Here is a 132-residue protein sequence, read N- to C-terminus: Small ribosomal subunit protein uS8 (132 aa).

The protein belongs to the universal ribosomal protein uS8 family. In terms of assembly, part of the 30S ribosomal subunit. Contacts proteins S5 and S12.

One of the primary rRNA binding proteins, it binds directly to 16S rRNA central domain where it helps coordinate assembly of the platform of the 30S subunit. The polypeptide is Small ribosomal subunit protein uS8 (Geobacillus thermodenitrificans (strain NG80-2)).